The chain runs to 29 residues: Frontoxin VI (29 aa).

An intrachain disulfide couples C3 to C24.

In terms of tissue distribution, expressed by the venom gland.

It localises to the secreted. In terms of biological role, binds to muscle nicotinic acetylcholine receptor (nAChR) and inhibit acetylcholine from binding to the receptor, thereby impairing neuromuscular transmission. The sequence is that of Frontoxin VI from Micrurus frontalis (Coral snake).